The primary structure comprises 129 residues: MMLDTLANALSTIMNNEVRGKKQCVIYPSSKLIVAVLDTLKRSGYIGDFELIDDGRGGKIVVNLLGRINKIGVIKPRYPVKKNEFEAWEREYLPSRDVGLLIVSTPKGVMTHREAKEKGLGGVLLAYVY.

The protein belongs to the universal ribosomal protein uS8 family. In terms of assembly, part of the 30S ribosomal subunit.

One of the primary rRNA binding proteins, it binds directly to 16S rRNA central domain where it helps coordinate assembly of the platform of the 30S subunit. This chain is Small ribosomal subunit protein uS8, found in Thermofilum pendens (strain DSM 2475 / Hrk 5).